A 451-amino-acid chain; its full sequence is Probable glycine dehydrogenase (decarboxylating) subunit 1 (451 aa).

This sequence belongs to the GcvP family. N-terminal subunit subfamily. The glycine cleavage system is composed of four proteins: P, T, L and H. In this organism, the P 'protein' is a heterodimer of two subunits.

It catalyses the reaction N(6)-[(R)-lipoyl]-L-lysyl-[glycine-cleavage complex H protein] + glycine + H(+) = N(6)-[(R)-S(8)-aminomethyldihydrolipoyl]-L-lysyl-[glycine-cleavage complex H protein] + CO2. The glycine cleavage system catalyzes the degradation of glycine. The P protein binds the alpha-amino group of glycine through its pyridoxal phosphate cofactor; CO(2) is released and the remaining methylamine moiety is then transferred to the lipoamide cofactor of the H protein. This chain is Probable glycine dehydrogenase (decarboxylating) subunit 1, found in Thioalkalivibrio sulfidiphilus (strain HL-EbGR7).